Reading from the N-terminus, the 57-residue chain is Phylloseptin-Az4 (57 aa).

Positions 1 to 13 (LVLFLGLVSLSIC) are cleaved as a signal peptide. A propeptide spanning residues 14 to 35 (EEEKRETEEEENDQEEDDKSEE) is cleaved from the precursor. The segment at 16 to 35 (EKRETEEEENDQEEDDKSEE) is disordered. Residues 21 to 32 (EEEENDQEEDDK) are compositionally biased toward acidic residues. A Leucine amide modification is found at leucine 56.

Expressed by the skin glands.

The protein resides in the secreted. In terms of biological role, has antibacterial activity against the Gram-positive bacterium M.luteus ATCC 49732 (MIC=1.3 uM). Does not inhibit the growth of the fungus C.albicans. This Pithecopus azureus (Orange-legged monkey tree frog) protein is Phylloseptin-Az4 (psn12).